We begin with the raw amino-acid sequence, 785 residues long: MASVQDIGLSAAINLLSAFAFLFAFAMLRLQPVNDRVYFPKWYLKGIRGSPTRSRGIMTRFVNLDWTTYVKFLNWMPAALQMPEPELIEHAGLDSAVYIRIYLLGLKMFVPITLLAFGVLVPVNWTGETLENIDDLTFSNVDKLSISNVPPGSPRFWAHITMTYVITFWTCYILYMEYKAVANMRLRHLAAESRRPDQLTVLVRNVPPDPDESVNEHVEHFFCVNHPDHYLCHQVVYNANDLAKLVAQRKAMQNWLTYYENKFERKPSSRPTTKTGYGGFWGTTVDAIDFYTSKMDILAEQEAVEREKIMNDPKAIMPAAFVSFRSRWGTAVCAQTQQCHNPTIWLTEWAPEPRDVFWDNLAIPYVELSIRRLLTTVALFFLIFCFMIPIAFVQSLANLEGIQKVLPFLKPVIEMKTVKSVIQGFLPGIALKIFLIILPTILMTMSQIEGYTSLSYLDRRSAEKYFWFIIVNVFLGSIITGTAFQQLKSFLEQPPTEIPKTVGVSIPMKATFFITYIMVDGWAGIAAEILRVVPLVIFHLKNTFLVKTEQDRQQAMDPGHLDFATSEPRIQFYFLLGLVYAAVAPILLPFIIVFFAFAYVVFRHQVINVYDQKYESGARYWPDVHRRLIICLIISQLLMMGLLSTKKFAKVTALLLPQPILTFWFYRYCAGRFESAFSKFPLQEAMVKDTLEKATEPNLNLKEYLKDAYVHPVFKGNDFDRPRVVDEEESNPLVRTKRTSQGTTRYNSEASSSATTTPVANNDSPRCWGTKIGSFGCVIVVSYSC.

The helical transmembrane segment at 7–27 (IGLSAAINLLSAFAFLFAFAM) threads the bilayer. Serine 54 carries the post-translational modification Phosphoserine. 9 consecutive transmembrane segments (helical) span residues 101–121 (IYLLGLKMFVPITLLAFGVLV), 156–176 (FWAHITMTYVITFWTCYILYM), 373–393 (LLTTVALFFLIFCFMIPIAFV), 425–445 (FLPGIALKIFLIILPTILMTM), 465–485 (YFWFIIVNVFLGSIITGTAFQ), 510–530 (ATFFITYIMVDGWAGIAAEIL), 582–602 (AVAPILLPFIIVFFAFAYVVF), 628–648 (LIICLIISQLLMMGLLSTKKF), and 651–671 (VTALLLPQPILTFWFYRYCAG). Residues 725 to 761 (VDEEESNPLVRTKRTSQGTTRYNSEASSSATTTPVAN) form a disordered region. Over residues 739 to 761 (TSQGTTRYNSEASSSATTTPVAN) the composition is skewed to polar residues.

The protein belongs to the CSC1 (TC 1.A.17) family. Post-translationally, phosphorylated and activated by BIK1.

The protein localises to the membrane. It catalyses the reaction Ca(2+)(in) = Ca(2+)(out). Calcium-permeable channel involved in plant stomatal immunity. The protein is Hyperosmolality-gated Ca2+ permeable channel 1.7 of Arabidopsis thaliana (Mouse-ear cress).